We begin with the raw amino-acid sequence, 125 residues long: Fumarate reductase subunit D (125 aa).

3 consecutive transmembrane segments (helical) span residues 30–50 (FAMI…LGVI), 63–83 (FATS…PMWH), and 105–125 (IACY…IFMI).

The protein belongs to the FrdD family. As to quaternary structure, part of an enzyme complex containing four subunits: a flavoprotein (FrdA), an iron-sulfur protein (FrdB), and two hydrophobic anchor proteins (FrdC and FrdD).

It is found in the cell inner membrane. Its function is as follows. Anchors the catalytic components of the fumarate reductase complex to the cell membrane, binds quinones. The protein is Fumarate reductase subunit D of Vibrio campbellii (strain ATCC BAA-1116).